The chain runs to 560 residues: CTP synthase (560 aa).

The interval 1-272 is amidoligase domain; it reads MSIGDVCSAR…DTQILSHFGM (272 aa). Serine 20 serves as a coordination point for CTP. Serine 20 is a UTP binding site. Residues 21-26 and aspartate 78 contribute to the ATP site; that span reads SLGKGL. Mg(2+) contacts are provided by aspartate 78 and glutamate 146. CTP-binding positions include 153–155, 193–198, and lysine 229; these read DIE and KTKPTQ. Residues 193–198 and lysine 229 contribute to the UTP site; that span reads KTKPTQ. The Glutamine amidotransferase type-1 domain maps to 297–539; that stretch reads TIAIIGKYTK…VQNVLQIKQR (243 aa). Residue glycine 356 coordinates L-glutamine. Cysteine 383 serves as the catalytic Nucleophile; for glutamine hydrolysis. L-glutamine-binding positions include 384-387, glutamate 407, and arginine 467; that span reads MGMQ. Residues histidine 512 and glutamate 514 contribute to the active site.

Belongs to the CTP synthase family. Homotetramer.

It carries out the reaction UTP + L-glutamine + ATP + H2O = CTP + L-glutamate + ADP + phosphate + 2 H(+). It catalyses the reaction L-glutamine + H2O = L-glutamate + NH4(+). The enzyme catalyses UTP + NH4(+) + ATP = CTP + ADP + phosphate + 2 H(+). The protein operates within pyrimidine metabolism; CTP biosynthesis via de novo pathway; CTP from UDP: step 2/2. Allosterically activated by GTP, when glutamine is the substrate; GTP has no effect on the reaction when ammonia is the substrate. The allosteric effector GTP functions by stabilizing the protein conformation that binds the tetrahedral intermediate(s) formed during glutamine hydrolysis. Inhibited by the product CTP, via allosteric rather than competitive inhibition. Functionally, catalyzes the ATP-dependent amination of UTP to CTP with either L-glutamine or ammonia as the source of nitrogen. Regulates intracellular CTP levels through interactions with the four ribonucleotide triphosphates. The polypeptide is CTP synthase (Anaplasma marginale (strain Florida)).